A 217-amino-acid chain; its full sequence is 3,4-dihydroxy-2-butanone 4-phosphate synthase (217 aa).

D-ribulose 5-phosphate is bound by residues 37–38, Asp42, 150–154, and Glu174; these read RE and RGGHT. Residue Glu38 coordinates Mg(2+). His153 is a Mg(2+) binding site.

It belongs to the DHBP synthase family. Homodimer. It depends on Mg(2+) as a cofactor. Mn(2+) is required as a cofactor.

It catalyses the reaction D-ribulose 5-phosphate = (2S)-2-hydroxy-3-oxobutyl phosphate + formate + H(+). It functions in the pathway cofactor biosynthesis; riboflavin biosynthesis; 2-hydroxy-3-oxobutyl phosphate from D-ribulose 5-phosphate: step 1/1. Catalyzes the conversion of D-ribulose 5-phosphate to formate and 3,4-dihydroxy-2-butanone 4-phosphate. The protein is 3,4-dihydroxy-2-butanone 4-phosphate synthase of Cronobacter sakazakii (strain ATCC BAA-894) (Enterobacter sakazakii).